Reading from the N-terminus, the 357-residue chain is 3-isopropylmalate dehydrogenase (357 aa).

Substrate is bound by residues Arg97, Arg107, Arg135, and Asp224. Residues Asp224, Asp248, and Asp252 each coordinate Mg(2+). 282–294 (GSAPDIAGKNIAN) lines the NAD(+) pocket.

It belongs to the isocitrate and isopropylmalate dehydrogenases family. LeuB type 1 subfamily. In terms of assembly, homodimer. The cofactor is Mg(2+). Mn(2+) serves as cofactor.

The protein localises to the cytoplasm. It carries out the reaction (2R,3S)-3-isopropylmalate + NAD(+) = 4-methyl-2-oxopentanoate + CO2 + NADH. It functions in the pathway amino-acid biosynthesis; L-leucine biosynthesis; L-leucine from 3-methyl-2-oxobutanoate: step 3/4. Its function is as follows. Catalyzes the oxidation of 3-carboxy-2-hydroxy-4-methylpentanoate (3-isopropylmalate) to 3-carboxy-4-methyl-2-oxopentanoate. The product decarboxylates to 4-methyl-2 oxopentanoate. In Prochlorococcus marinus (strain MIT 9312), this protein is 3-isopropylmalate dehydrogenase.